A 327-amino-acid chain; its full sequence is Malate dehydrogenase (327 aa).

12–18 is an NAD(+) binding site; sequence GAAGQIG. The substrate site is built by Arg93 and Arg99. NAD(+)-binding positions include Asn106, Gln113, and 130 to 132; that span reads VGN. Substrate contacts are provided by Asn132 and Arg163. The Proton acceptor role is filled by His188.

Belongs to the LDH/MDH superfamily. MDH type 2 family.

The catalysed reaction is (S)-malate + NAD(+) = oxaloacetate + NADH + H(+). Its function is as follows. Catalyzes the reversible oxidation of malate to oxaloacetate. This chain is Malate dehydrogenase, found in Cupriavidus metallidurans (strain ATCC 43123 / DSM 2839 / NBRC 102507 / CH34) (Ralstonia metallidurans).